The following is a 449-amino-acid chain: MSHITFDYSKVLESFAGQHEIDFLQGQVTEADKLLREGTGPGSDFLGWLDLPENYDKEEFARILTAAEKIKSDSEVLVVIGIGGSYLGAKAAIDFLNHHFANLQTAKERKAPQILYAGNSISSTYLADLVEYVQDKEFSVNVISKSGTTTEPAIAFRVFKELLVKKYGQEEANKRIYATTDKVKGAVKVEADANNWETFVVPDNVGGRFSVLTAVGLLPIAASGADITALMEGANAARKDLSSDKISENIAYQYAAVRNLLYRKGYITEILANYEPSLQYFGEWWKQLAGESEGKDQKGIYPTSANFSTDLHSLGQFIQEGYRNLFETVIRVDNPRKNVIIPELAEDLDGLGYLQGKDVDFVNKKATDGVLLAHTDGGVPNMFVTLPAQDEFTLGYTIYFFELAIAVSGYMNAVNPFDQPGVEAYKRNMFALLGKPGFEALSAELNARL.

Glu-291 (proton donor) is an active-site residue. Active-site residues include His-312 and Lys-426.

This sequence belongs to the GPI family.

The protein resides in the cytoplasm. It carries out the reaction alpha-D-glucose 6-phosphate = beta-D-fructose 6-phosphate. The protein operates within carbohydrate biosynthesis; gluconeogenesis. It functions in the pathway carbohydrate degradation; glycolysis; D-glyceraldehyde 3-phosphate and glycerone phosphate from D-glucose: step 2/4. In terms of biological role, catalyzes the reversible isomerization of glucose-6-phosphate to fructose-6-phosphate. The protein is Glucose-6-phosphate isomerase of Streptococcus pyogenes serotype M49 (strain NZ131).